The chain runs to 350 residues: MSQLQVRHDWKREEIEALFALPMNDLLFKAHSIHREEYDPNEVQISRLLSIKTGACPEDCKYCPQSARYDTGLEKERLLAMETVLTEARSAKAAGASRFCMGAAWRNPKDKDMPYLKQMVQEVKALGMETCMTLGMLSAEQANELAEAGLDYYNHNLDTSPEYYGDVITTRTYQNRLDTLSHVRASGMKVCSGGIVGMGEKATDRAGLLQQLANLPQHPDSVPINMLVKVAGTPFEKLDDLDPLEFVRTIAVARILMPLSRVRLSAGRENMSDELQAMCFFAGANSIFYGCKLLTTPNPEESDDMGLFRRLGLRPEQGAAASIDDEQAVLAKAAAYQDKASAQFYDAAAL.

The 228-residue stretch at 41–268 (NEVQISRLLS…LSRVRLSAGR (228 aa)) folds into the Radical SAM core domain. Residues cysteine 56, cysteine 60, and cysteine 63 each coordinate [4Fe-4S] cluster. [2Fe-2S] cluster contacts are provided by cysteine 100, cysteine 131, cysteine 191, and arginine 263.

Belongs to the radical SAM superfamily. Biotin synthase family. As to quaternary structure, homodimer. The cofactor is [4Fe-4S] cluster. [2Fe-2S] cluster is required as a cofactor.

It catalyses the reaction (4R,5S)-dethiobiotin + (sulfur carrier)-SH + 2 reduced [2Fe-2S]-[ferredoxin] + 2 S-adenosyl-L-methionine = (sulfur carrier)-H + biotin + 2 5'-deoxyadenosine + 2 L-methionine + 2 oxidized [2Fe-2S]-[ferredoxin]. It participates in cofactor biosynthesis; biotin biosynthesis; biotin from 7,8-diaminononanoate: step 2/2. Catalyzes the conversion of dethiobiotin (DTB) to biotin by the insertion of a sulfur atom into dethiobiotin via a radical-based mechanism. In Shewanella oneidensis (strain ATCC 700550 / JCM 31522 / CIP 106686 / LMG 19005 / NCIMB 14063 / MR-1), this protein is Biotin synthase.